Here is a 608-residue protein sequence, read N- to C-terminus: N(6)-adenosine-methyltransferase MT-A70-like protein (608 aa).

Positions 250–265 are enriched in basic and acidic residues; sequence KKKQERRDEKELRPDV. A disordered region spans residues 250–272; sequence KKKQERRDEKELRPDVDAGENVT. Residues 395–396 and aspartate 413 each bind S-adenosyl-L-methionine; that span reads DL. A gate loop 1 region spans residues 414 to 428; the sequence is PPWDIHMELPYGTMS. Residues 480–497 form an interphase loop region; it reads QLQRIIRTGRTGHWLNHG. Residues 483–496 form a positively charged region required for RNA-binding region; sequence RIIRTGRTGHWLNH. Positions 525–533 are gate loop 2; it reads VRATSHKPD. S-adenosyl-L-methionine is bound by residues lysine 531, 554-557, and 567-568; these read RPHN and NQ.

It belongs to the MT-A70-like family. As to quaternary structure, component of the WMM complex, a N6-methyltransferase complex composed of a catalytic subcomplex, named MAC, and of an associated subcomplex, named MACOM. The MAC subcomplex is composed of Ime4/Mettl3 and Mettl14. The MACOM subcomplex is composed of fl(2)d, Flacc/Xio, Hakai, vir, and, in some cases of nito. Expressed in testes. In the ovaries, detected in germaria, prefollicle, follicle and polar cells (at protein levels). Detected in the ooplasm and in the cells of the 16-cell cyst of early stages (at protein levels).

It localises to the nucleus. The enzyme catalyses an adenosine in mRNA + S-adenosyl-L-methionine = an N(6)-methyladenosine in mRNA + S-adenosyl-L-homocysteine + H(+). In terms of biological role, catalytic component of the WMM complex, a complex that mediates N6-methyladenosine (m6A) methylation of mRNAs, a modification that plays a role in the efficiency of mRNA splicing and is required for sex determination. In the heterodimer formed with Mettl14, constitutes the catalytic core. Required for sex determination and dosage compensation via Sxl alternative splicing: m6A methylation acts as a key regulator of Sxl pre-mRNA and promotes female-specific alternative splicing of Sxl, which determines female physiognomy. M6A methylation is also required for neuronal functions. During oogenesis, required for egg chamber development probably as part of the N/Notch signaling. The sequence is that of N(6)-adenosine-methyltransferase MT-A70-like protein from Drosophila melanogaster (Fruit fly).